The chain runs to 346 residues: Protein tas (346 aa).

Catalysis depends on Tyr53, which acts as the Proton donor. NADP(+) is bound at residue 234–244; the sequence is SCLGFGTLTGK.

The protein belongs to the aldo/keto reductase family. Aldo/keto reductase 2 subfamily.

This Escherichia coli (strain K12) protein is Protein tas (tas).